A 100-amino-acid chain; its full sequence is Integration host factor subunit beta (100 aa).

It belongs to the bacterial histone-like protein family. In terms of assembly, heterodimer of an alpha and a beta chain.

This protein is one of the two subunits of integration host factor, a specific DNA-binding protein that functions in genetic recombination as well as in transcriptional and translational control. The protein is Integration host factor subunit beta of Rhodospirillum rubrum (strain ATCC 11170 / ATH 1.1.1 / DSM 467 / LMG 4362 / NCIMB 8255 / S1).